A 153-amino-acid chain; its full sequence is Ribosome maturation factor RimP (153 aa).

It belongs to the RimP family.

Its subcellular location is the cytoplasm. Its function is as follows. Required for maturation of 30S ribosomal subunits. The polypeptide is Ribosome maturation factor RimP (Coxiella burnetii (strain RSA 331 / Henzerling II)).